Reading from the N-terminus, the 274-residue chain is tRNA pseudouridine synthase A (274 aa).

Aspartate 60 acts as the Nucleophile in catalysis. Tyrosine 118 serves as a coordination point for substrate.

Belongs to the tRNA pseudouridine synthase TruA family. As to quaternary structure, homodimer.

The catalysed reaction is uridine(38/39/40) in tRNA = pseudouridine(38/39/40) in tRNA. In terms of biological role, formation of pseudouridine at positions 38, 39 and 40 in the anticodon stem and loop of transfer RNAs. The chain is tRNA pseudouridine synthase A from Picosynechococcus sp. (strain ATCC 27264 / PCC 7002 / PR-6) (Agmenellum quadruplicatum).